An 819-amino-acid chain; its full sequence is Lysine-specific demethylase JMJ18 (819 aa).

A disordered region spans residues 1–39 (MENPPLESEIKEDMSLKNHPPDKDKDKDTIMEQPSSPRH). A compositionally biased stretch (basic and acidic residues) spans 8-30 (SEIKEDMSLKNHPPDKDKDKDTI). Residues 59-100 (APVFTPSLEEFVDPLAYIEKIRPLAEPYGICRIIPPSTWKPP) form the JmjN domain. Residues 120-171 (TVDLLQNREPMKKKPKSRKRKRRRNSRMGSSKRRSGSSPAESTSSPEAEEKF) are disordered. The Nuclear localization signal motif lies at 130–137 (MKKKPKSR). The segment covering 130 to 154 (MKKKPKSRKRKRRRNSRMGSSKRRS) has biased composition (basic residues). Residues 155-165 (GSSPAESTSSP) are compositionally biased toward low complexity. Residues 261–427 (QYTLSGWNLN…HGQNAVELYS (167 aa)) enclose the JmjC domain. Fe cation contacts are provided by His-307, Glu-309, and His-395. Positions 519, 522, 533, 535, 542, 545, 550, and 552 each coordinate Zn(2+). The segment at 519–571 (CFSCFYDLHLSASGCKCSPEEYACLKHADDLCSCDVKDGFILLRYTMDELSSL) adopts a C5HC2 zinc-finger fold. Residues 644–702 (ASENLGVSVEPINLGFLIFGKLWCNKYAIFPKGFRSRVKFYNVLDPTRMSNYISEVLDA) form the FYR N-terminal domain. In terms of domain architecture, FYR C-terminal spans 704–788 (LMGPLFRVTL…HRLVEYWNHK (85 aa)).

The protein belongs to the JARID1 histone demethylase family. It depends on Fe(2+) as a cofactor. As to expression, expressed in vascular tissues of roots, cotyledons, leaves and flowers. Expressed predominantly in phloem companion cells of roots. Present in inflorescences, roots, siliques, leaves and stems.

It localises to the nucleus. The catalysed reaction is N(6),N(6),N(6)-trimethyl-L-lysyl(4)-[histone H3] + 2-oxoglutarate + O2 = N(6),N(6)-dimethyl-L-lysyl(4)-[histone H3] + formaldehyde + succinate + CO2. The enzyme catalyses N(6),N(6)-dimethyl-L-lysyl(4)-[histone H3] + 2-oxoglutarate + O2 = N(6)-methyl-L-lysyl(4)-[histone H3] + formaldehyde + succinate + CO2. In terms of biological role, histone demethylase that demethylates 'Lys-4' (H3K4me) of histone H3 with a specific activity for H3K4me3 and H3K4me2. No activity on H3K9me3/2, H3K27me3/2 and H3K36me3/2. Involved in the control of flowering time by demethylating H3K4me3 at the FLC locus and repressing its expression. The repression of FLC level and reduction in H3K4me3 at the FLC locus results in induction of the flowering activator FT, which is a downstream target of FLC. The protein is Lysine-specific demethylase JMJ18 of Arabidopsis thaliana (Mouse-ear cress).